Consider the following 66-residue polypeptide: Large ribosomal subunit protein bL33c (66 aa).

This sequence belongs to the bacterial ribosomal protein bL33 family.

The protein localises to the plastid. It localises to the chloroplast. The sequence is that of Large ribosomal subunit protein bL33c from Adiantum capillus-veneris (Maidenhair fern).